Here is a 132-residue protein sequence, read N- to C-terminus: Large ribosomal subunit protein uL14 (132 aa).

This sequence belongs to the universal ribosomal protein uL14 family. In terms of assembly, part of the 50S ribosomal subunit. Forms a cluster with proteins L3 and L24e, part of which may contact the 16S rRNA in 2 intersubunit bridges.

In terms of biological role, binds to 23S rRNA. Forms part of two intersubunit bridges in the 70S ribosome. The polypeptide is Large ribosomal subunit protein uL14 (Halobacterium salinarum (strain ATCC 29341 / DSM 671 / R1)).